Reading from the N-terminus, the 897-residue chain is MSVTRGHKSTPSLLLLFLSVLTSLLAAIPVLQANAPSAGPGVRILRPPESTVAPSGDEVVFVCETSLPPEHFEWSYASTRSHAPRFKYLKSSSAKNNSNITITNDNDISKLRVIVRPETLGEYRCVAWFGPLAVTSTTARLELATISGDKIAQRSNWRVAAGNTVLWQCGQVVSNPAPTWSFYYNDIEMPAASTLSDSSGTLLLPHVSTASSGTYTCVATNTASGQRLAMPRRLELQVPSAALPSAAPALLPGQSVRTEVLARIGETVLLLCPGVGYPPPTAVWSSPDVTGAVYNNRTRVLPYGLQIGGLQPKDTGTYICYLDNGIRPALEHYIQLVVQQAPRIVRPPSANLTNEGEFMVLECAATGTPTPKIYWLLNGENSVYDTESELPANGSLILRRVQKRHAGCVQCFARNVLGEDSAGTLLQVNPTQIQAGDGMGTGGMGRSSNRNAHNRKQKQMVPPSAPNVTRLSDESVMLRWHVVKNDGLHIQFFKVQYRMTDSGKRKSWQTTNENIPYGKQRHDSDEAVRNFTSSVTGLRPDHSYRFRIMAVYSNNDNKESNTSGKFFLQRGAALAPLPVPELLDIKEYSQTAVMLHWHLPSDADEQLISGYYAYYRPSASAGEYLKATIDGAKARSALISALEPGTIYEFKLQSFSAMAASEFSSLKQGRTQRPRSSTTAQPTMHTVDTTTPTHNETFNMNPLLTGTISGGALLILLVISACLCLCKRRHSRGDNSQNKPRLAELREDFVPLNTCSPNKPRTRHIHITLNPLAQQQQQQLQQQHQQDEKDSQDNELGYFQRQPVVYDAETLGFNGLARMSSSSLRRSQRTLERAAAGGGSGGNNNNLNQATDASLAASLDSPRLQASNKPGRVILKRSRLSSRSENLSSGSLNSVGV.

An N-terminal signal peptide occupies residues 1-26 (MSVTRGHKSTPSLLLLFLSVLTSLLA). Residues 27–702 (AIPVLQANAP…THNETFNMNP (676 aa)) lie on the Extracellular side of the membrane. 4 consecutive Ig-like C2-type domains span residues 40–147 (PGVR…ATIS), 148–235 (GDKI…RRLE), 244–336 (PSAA…YIQL), and 342–429 (PRIV…LQVN). 3 disulfide bridges follow: Cys-63-Cys-125, Cys-169-Cys-217, and Cys-272-Cys-320. Residues Asn-96 and Asn-99 are each glycosylated (N-linked (GlcNAc...) asparagine). Asn-296, Asn-351, Asn-393, and Asn-467 each carry an N-linked (GlcNAc...) asparagine glycan. Cys-363 and Cys-411 form a disulfide bridge. The interval 434–468 (QAGDGMGTGGMGRSSNRNAHNRKQKQMVPPSAPNV) is disordered. 2 consecutive Fibronectin type-III domains span residues 462-571 (PPSA…LQRG) and 579-674 (VPEL…TQRP). Arg-498, Lys-504, and Lys-506 together coordinate heparin. N-linked (GlcNAc...) asparagine glycosylation is present at Asn-530. A heparin-binding site is contributed by Arg-545. The N-linked (GlcNAc...) asparagine glycan is linked to Asn-561. Residues 666–682 (LKQGRTQRPRSSTTAQP) show a composition bias toward polar residues. The segment at 666-694 (LKQGRTQRPRSSTTAQPTMHTVDTTTPTH) is disordered. A compositionally biased stretch (low complexity) spans 683 to 694 (TMHTVDTTTPTH). Asn-695 carries N-linked (GlcNAc...) asparagine glycosylation. Residues 703–723 (LLTGTISGGALLILLVISACL) form a helical membrane-spanning segment. Residues 724–897 (CLCKRRHSRG…SSGSLNSVGV (174 aa)) lie on the Cytoplasmic side of the membrane. Disordered stretches follow at residues 773-793 (AQQQ…DSQD) and 819-849 (MSSS…NLNQ). Residues 774–784 (QQQQQQLQQQH) are compositionally biased toward low complexity.

This sequence belongs to the immunoglobulin superfamily. IHOG family. Homodimer. Heterotetramer; 2 iHog chains bind 2 hh chains when facilitated by heparin, heparin is required to promote high-affinity interactions between hh and iHog.

The protein localises to the membrane. Functionally, mediates response to the active Hedgehog (Hh) protein signal in embryos, functioning upstream or at the level of patched (ptc). This Drosophila mojavensis (Fruit fly) protein is Interference hedgehog.